A 500-amino-acid chain; its full sequence is E3 ubiquitin-protein ligase TRIM69 (500 aa).

Positions 1-22 (MEVSSRPPSNFDPGNYVEMSDP) are disordered. Positions 1-153 (MEVSSRPPSN…SMGQSKDFLQ (153 aa)) are necessary for nuclear localization. An RING-type zinc finger spans residues 42–83 (CPLCNDWFRDPLMLTCGHNFCQDCIQSFWKVHSKETFCPDCK). The stretch at 217 to 256 (NKEKDILNDLRDEGKLLNEEMEVNLNQIQEQCLVAKDMLA) forms a coiled coil. The 195-residue stretch at 306–500 (PIQYIIWKEM…KEPLHIVHPQ (195 aa)) folds into the B30.2/SPRY domain. Ser342 carries the phosphoserine modification.

It belongs to the TRIM/RBCC family. In terms of assembly, homo-multimer; required for antiviral activity. Interacts with PML. Post-translationally, phosphorylated. Phosphorylation is necessary for nuclear localization. As to expression, expressed in spermatid.

It is found in the cytoplasm. It localises to the nucleus. The protein resides in the nucleus speckle. The protein localises to the cytoskeleton. Its subcellular location is the microtubule organizing center. It is found in the centrosome. It catalyses the reaction S-ubiquitinyl-[E2 ubiquitin-conjugating enzyme]-L-cysteine + [acceptor protein]-L-lysine = [E2 ubiquitin-conjugating enzyme]-L-cysteine + N(6)-ubiquitinyl-[acceptor protein]-L-lysine.. Its pathway is protein modification; protein ubiquitination. Functionally, E3 ubiquitin ligase that plays an important role in antiviral immunity by restricting different viral infections including dengue virus or vesicular stomatitis indiana virus. Ubiquitinates viral proteins such as dengue virus NS3 thereby limiting infection. In addition, acts as a key mediator of type I interferon induced microtubule stabilization by directly associating to microtubules independently of its E3 ligase activity. Also plays a role in cataract formation together with TP53. Mechanistically, inhibits UVB-induced cell apoptosis and reactive oxygen species (ROS) production by inducing TP53 ubiquitination. Regulates centrosome dynamics and mitotic progression by ubiquitinating STK3/MST2; leading to its redistribution to the perinuclear cytoskeleton and subsequent phosphorylation by PLK1. In Mus musculus (Mouse), this protein is E3 ubiquitin-protein ligase TRIM69 (Trim69).